We begin with the raw amino-acid sequence, 398 residues long: MSPLKCMALAALGAVMFVGSAQAQTCDWPLWQNYAKRFVQDDGRVLNSSMKPTESSSEGQSYAMFFALVGNDRASFDKLWTWTKANMSGADIGQNLPGWLWGKKADNTWGVIDPNSASDADLWMAYALLEAARVWNAPQYRADAQLLLANVERNLIVRVPGLGKMLLPGPVGYVHAGGLWRFNPSYQVLAQLRRFHKERPNAGWNEVADSNAKMLADTASNPHGLAANWVGYRATSANTGLFVVDPFSDDLGSYDAIRTYMWAGMTAKGDPLAAPMLKSLGGMTRATAASATGYPPEKIHVLTGEVEKNNGYTPMGFSASTVAFFQARGETALAQLQKAKVDDALAKALAPSAPDTAQPIYYDYMLSLFSQGFADQKYRFEQDGTVKLSWEAACAVTR.

Positions 1–23 are cleaved as a signal peptide; that stretch reads MSPLKCMALAALGAVMFVGSAQA. Catalysis depends on glutamate 58, which acts as the Proton donor. Residue aspartate 119 is the Nucleophile of the active site.

The protein belongs to the glycosyl hydrolase 8 (cellulase D) family.

It is found in the secreted. The enzyme catalyses Endohydrolysis of (1-&gt;4)-beta-D-glucosidic linkages in cellulose, lichenin and cereal beta-D-glucans.. It participates in glycan metabolism; bacterial cellulose biosynthesis. Its function is as follows. Hydrolyzes carboxymethylcellulose. The sequence is that of Endoglucanase (bcsZ) from Pseudomonas fluorescens (strain SBW25).